A 353-amino-acid polypeptide reads, in one-letter code: uncharacterized protein (353 aa).

Residues 1–24 (MRVVKRIAVACYLGITIFSGIAFG) form the signal peptide.

The protein belongs to the chlamydial CPn_1058/CT_355/TC_0634 family.

This is an uncharacterized protein from Chlamydia muridarum (strain MoPn / Nigg).